Here is a 902-residue protein sequence, read N- to C-terminus: Leucine-rich repeat-containing G-protein coupled receptor 5 (902 aa).

The first 22 residues, 1 to 22 (MDTSKTSFFLFSVLCSLQLVGA), serve as a signal peptide directing secretion. Residues 23–558 (ARPGKQQRSC…HLFGSWLTRT (536 aa)) lie on the Extracellular side of the membrane. Intrachain disulfides connect Cys32–Cys38 and Cys36–Cys49. An LRRNT domain is found at 32–61 (CPTPCECEQEGMLVRVDCSDRALTSLPRNL). LRR repeat units lie at residues 41 to 61 (EGML…PRNL), 62 to 85 (SIFT…VMHN), 86 to 109 (LHFL…AFAG), 111 to 133 (GSLK…ALHN), 134 to 157 (LRSL…SFNG), 159 to 181 (FSLR…ALES), 182 to 205 (LSAL…AFRN), 207 to 229 (SSLV…CFDG), 230 to 253 (LHSL…IKTL), 254 to 276 (KNLK…AFIG), 278 to 300 (PSLI…AFQH), 302 to 324 (PELR…LTGT), 325 to 347 (TSLE…VCTQ), 348 to 372 (LPNL…GCQR), 374 to 393 (QKID…TFQQ), 394 to 417 (LVGL…SFSS), and 418 to 441 (LPSL…GLHG). Residues Asn60 and Asn74 are each glycosylated (N-linked (GlcNAc...) asparagine). Asn205 carries an N-linked (GlcNAc...) asparagine glycan. Cys345 and Cys370 form a disulfide bridge. A disulfide bridge connects residues Cys476 and Cys537. N-linked (GlcNAc...) asparagine glycosylation occurs at Asn496. The helical transmembrane segment at 559 to 579 (GVWLIVLLSFVCNALVIATVF) threads the bilayer. The Cytoplasmic portion of the chain corresponds to 580-589 (RPLSYVPSIK). A helical transmembrane segment spans residues 590-610 (LLIGLIAIMNTLMGLSSGVLA). An LRR 18 repeat occupies 598–619 (MNTLMGLSSGVLATVDALTFGN). Topologically, residues 611–634 (TVDALTFGNFAQYGAWWESGVGCQ) are extracellular. Residues Cys633 and Cys708 are joined by a disulfide bond. The chain crosses the membrane as a helical span at residues 635 to 655 (ITGFLSVFAAETSIFLLTVAA). Over 656-678 (LERGFSIKCTTKFETKSSFINVK) the chain is Cytoplasmic. A helical membrane pass occupies residues 679-699 (LSIVFCFLLSIVIAVSPLLSG). The Extracellular segment spans residues 700–718 (STYGTSPLCFPLLFGDPSS). The chain crosses the membrane as a helical span at residues 719–739 (MGFMVALVLLNSLCFLVMTIA). Residues 740-763 (YTKLYCSLEKGELENIWDCSMVKH) lie on the Cytoplasmic side of the membrane. Residues 764-784 (IALLLFTNCILYCPVAFLSFS) form a helical membrane-spanning segment. The Extracellular portion of the chain corresponds to 785 to 798 (SLLNLTFISPEVNK). Residues Asn788 and Asn797 are each glycosylated (N-linked (GlcNAc...) asparagine). The helical transmembrane segment at 799-819 (SILLLIIPLPACLNPLLYILF) threads the bilayer. Residues 820–902 (NPHFKEDIGS…LSAVAFVPCH (83 aa)) lie on the Cytoplasmic side of the membrane.

The protein belongs to the G-protein coupled receptor 1 family.

The protein resides in the cell membrane. The protein localises to the golgi apparatus. It is found in the trans-Golgi network membrane. Functionally, receptor for R-spondins that potentiates the canonical Wnt signaling pathway and acts as a stem cell marker of the intestinal epithelium and the hair follicle. Upon binding to R-spondins (RSPO1, RSPO2, RSPO3 or RSPO4), associates with phosphorylated LRP6 and frizzled receptors that are activated by extracellular Wnt receptors, triggering the canonical Wnt signaling pathway to increase expression of target genes. In contrast to classical G-protein coupled receptors, does not activate heterotrimeric G-proteins to transduce the signal. Involved in the development and/or maintenance of the adult intestinal stem cells during postembryonic development. The polypeptide is Leucine-rich repeat-containing G-protein coupled receptor 5 (lgr5) (Xenopus tropicalis (Western clawed frog)).